The following is a 216-amino-acid chain: Inactive ribonuclease-like protein 10 (216 aa).

The first 26 residues, 1–26 (MKLNLVQIFFMLLMLLLGLGMGLGLG), serve as a signal peptide directing secretion. A disordered region spans residues 43–65 (EFWSSDSQDKAEATEEGDGTQTT).

This sequence belongs to the pancreatic ribonuclease family. In terms of processing, the N-terminus is blocked. Glycosylated.

It localises to the secreted. Its function is as follows. Secreted proximal epididymal protein required for post-testicular sperm maturation and male fertility. May be involved in sperm adhesion to the egg zona pellucida. Does not have ribonuclease activity. This chain is Inactive ribonuclease-like protein 10 (RNASE10), found in Homo sapiens (Human).